The sequence spans 271 residues: Acetyl-coenzyme A carboxylase carboxyl transferase subunit beta (271 aa).

The 251-residue stretch at 21 to 271 (LWIQCPYCKQ…LGDLLALHTA (251 aa)) folds into the CoA carboxyltransferase N-terminal domain. Zn(2+)-binding residues include Cys25, Cys28, Cys43, and Cys46. A C4-type zinc finger spans residues 25–46 (CPYCKQGSYRESLGNAQVCPHC).

This sequence belongs to the AccD/PCCB family. In terms of assembly, acetyl-CoA carboxylase is a heterohexamer composed of biotin carboxyl carrier protein (AccB), biotin carboxylase (AccC) and two subunits each of ACCase subunit alpha (AccA) and ACCase subunit beta (AccD). Zn(2+) is required as a cofactor.

It localises to the cytoplasm. The catalysed reaction is N(6)-carboxybiotinyl-L-lysyl-[protein] + acetyl-CoA = N(6)-biotinyl-L-lysyl-[protein] + malonyl-CoA. It functions in the pathway lipid metabolism; malonyl-CoA biosynthesis; malonyl-CoA from acetyl-CoA: step 1/1. Functionally, component of the acetyl coenzyme A carboxylase (ACC) complex. Biotin carboxylase (BC) catalyzes the carboxylation of biotin on its carrier protein (BCCP) and then the CO(2) group is transferred by the transcarboxylase to acetyl-CoA to form malonyl-CoA. In Lacticaseibacillus paracasei (strain ATCC 334 / BCRC 17002 / CCUG 31169 / CIP 107868 / KCTC 3260 / NRRL B-441) (Lactobacillus paracasei), this protein is Acetyl-coenzyme A carboxylase carboxyl transferase subunit beta.